The primary structure comprises 267 residues: MSNETIKVVIAGPRGRMGQEAVKLAVRTPHFELVGAIDHTYDQQTLREVMSADSDALIYTDIRACFQETKPDVLIDLTTPEIGKKHTKAALEHGVRPVVGTTGFSEADLEELQALTEEKGIGAIIAPNFALGAVLMMKFSQMAANYFEDVEIIELHHDQKLDAPSGTALKTAEMISSVRTEKQQGHPDEKEILPGARGAELNGIRLHSVRLPGLIAHQEVMFGMDGQTLKLRHDSYNRASFMSGVKLSVEQVMKIDQLVYGLENIID.

NAD(+)-binding positions include glycine 12–methionine 17, glycine 100–threonine 102, and alanine 126–phenylalanine 129. The active-site Proton donor/acceptor is the histidine 156. Histidine 157 lines the (S)-2,3,4,5-tetrahydrodipicolinate pocket. Lysine 160 serves as the catalytic Proton donor. A (S)-2,3,4,5-tetrahydrodipicolinate-binding site is contributed by glycine 166–threonine 167.

It belongs to the DapB family.

It localises to the cytoplasm. The catalysed reaction is (S)-2,3,4,5-tetrahydrodipicolinate + NAD(+) + H2O = (2S,4S)-4-hydroxy-2,3,4,5-tetrahydrodipicolinate + NADH + H(+). It catalyses the reaction (S)-2,3,4,5-tetrahydrodipicolinate + NADP(+) + H2O = (2S,4S)-4-hydroxy-2,3,4,5-tetrahydrodipicolinate + NADPH + H(+). Its pathway is amino-acid biosynthesis; L-lysine biosynthesis via DAP pathway; (S)-tetrahydrodipicolinate from L-aspartate: step 4/4. In terms of biological role, catalyzes the conversion of 4-hydroxy-tetrahydrodipicolinate (HTPA) to tetrahydrodipicolinate. In Bacillus velezensis (strain DSM 23117 / BGSC 10A6 / LMG 26770 / FZB42) (Bacillus amyloliquefaciens subsp. plantarum), this protein is 4-hydroxy-tetrahydrodipicolinate reductase.